Reading from the N-terminus, the 224-residue chain is Phosphoribosylformylglycinamidine synthase subunit PurQ (224 aa).

One can recognise a Glutamine amidotransferase type-1 domain in the interval 4–224; that stretch reads RIGVVTFPGT…YSALDAVLTG (221 aa). Cysteine 87 serves as the catalytic Nucleophile. Catalysis depends on residues histidine 195 and glutamate 197.

In terms of assembly, part of the FGAM synthase complex composed of 1 PurL, 1 PurQ and 2 PurS subunits.

The protein localises to the cytoplasm. It carries out the reaction N(2)-formyl-N(1)-(5-phospho-beta-D-ribosyl)glycinamide + L-glutamine + ATP + H2O = 2-formamido-N(1)-(5-O-phospho-beta-D-ribosyl)acetamidine + L-glutamate + ADP + phosphate + H(+). The enzyme catalyses L-glutamine + H2O = L-glutamate + NH4(+). It participates in purine metabolism; IMP biosynthesis via de novo pathway; 5-amino-1-(5-phospho-D-ribosyl)imidazole from N(2)-formyl-N(1)-(5-phospho-D-ribosyl)glycinamide: step 1/2. Part of the phosphoribosylformylglycinamidine synthase complex involved in the purines biosynthetic pathway. Catalyzes the ATP-dependent conversion of formylglycinamide ribonucleotide (FGAR) and glutamine to yield formylglycinamidine ribonucleotide (FGAM) and glutamate. The FGAM synthase complex is composed of three subunits. PurQ produces an ammonia molecule by converting glutamine to glutamate. PurL transfers the ammonia molecule to FGAR to form FGAM in an ATP-dependent manner. PurS interacts with PurQ and PurL and is thought to assist in the transfer of the ammonia molecule from PurQ to PurL. In Mycobacterium bovis (strain ATCC BAA-935 / AF2122/97), this protein is Phosphoribosylformylglycinamidine synthase subunit PurQ.